Reading from the N-terminus, the 262-residue chain is Vibriobactin-specific 2,3-dihydro-2,3-dihydroxybenzoate dehydrogenase (262 aa).

12 to 36 (LLVGSARGIGFSVLEHLLQAGAQVM) is a binding site for NAD(+). Serine 145 contacts substrate. The active-site Proton acceptor is tyrosine 158.

The protein belongs to the short-chain dehydrogenases/reductases (SDR) family.

The enzyme catalyses (2S,3S)-2,3-dihydroxy-2,3-dihydrobenzoate + NAD(+) = 2,3-dihydroxybenzoate + NADH + H(+). Its pathway is siderophore biosynthesis; vibriobactin biosynthesis. Its function is as follows. Involved in an early step of the biosynthesis of the catechol siderophore vibriobactin. Vibriobactin is a chelating compound involved in transporting iron from the bacterial environment into the cell cytoplasm. The chain is Vibriobactin-specific 2,3-dihydro-2,3-dihydroxybenzoate dehydrogenase (vibA) from Vibrio cholerae serotype O1 (strain ATCC 39315 / El Tor Inaba N16961).